Here is a 443-residue protein sequence, read N- to C-terminus: Zinc finger CCCH domain-containing protein 63 (443 aa).

Disordered stretches follow at residues 1 to 29 and 56 to 99; these read MDFD…MAPT and LPGP…SSSW. 2 consecutive C3H1-type zinc fingers follow at residues 30 to 56 and 109 to 136; these read DTRQ…HREL and TKTE…HCWS. WD repeat units lie at residues 149-190, 228-265, 272-311, 313-349, 354-396, and 404-442; these read GHEK…GVLK, GPVG…NCFE, GHTL…QTLT, HSSV…NLEV, KEEH…LFIR, and FAKQ…TAAL.

The polypeptide is Zinc finger CCCH domain-containing protein 63 (ZFWD2) (Arabidopsis thaliana (Mouse-ear cress)).